A 79-amino-acid chain; its full sequence is UPF0154 protein SSP1415 (79 aa).

Residues 4–24 (WLAIVLIVLALILGLVGGFFL) traverse the membrane as a helical segment.

The protein belongs to the UPF0154 family.

It localises to the membrane. The chain is UPF0154 protein SSP1415 from Staphylococcus saprophyticus subsp. saprophyticus (strain ATCC 15305 / DSM 20229 / NCIMB 8711 / NCTC 7292 / S-41).